The sequence spans 269 residues: Ribosomal RNA small subunit methyltransferase J (269 aa).

Residues 125 to 126 (ER) and aspartate 179 each bind S-adenosyl-L-methionine.

It belongs to the methyltransferase superfamily. RsmJ family.

The protein resides in the cytoplasm. The enzyme catalyses guanosine(1516) in 16S rRNA + S-adenosyl-L-methionine = N(2)-methylguanosine(1516) in 16S rRNA + S-adenosyl-L-homocysteine + H(+). Specifically methylates the guanosine in position 1516 of 16S rRNA. The sequence is that of Ribosomal RNA small subunit methyltransferase J from Pseudomonas savastanoi pv. phaseolicola (strain 1448A / Race 6) (Pseudomonas syringae pv. phaseolicola (strain 1448A / Race 6)).